The chain runs to 956 residues: MAM domain-containing glycosylphosphatidylinositol anchor protein 1 (956 aa).

An N-terminal signal peptide occupies residues 1–18; that stretch reads MEVTCLLLLALIPFHCRG. Ig-like domains are found at residues 24–123 and 132–230; these read PAQA…KSIR and PVLT…KSIT. Residue asparagine 42 is glycosylated (N-linked (GlcNAc...) asparagine). 2 cysteine pairs are disulfide-bonded: cysteine 60-cysteine 108 and cysteine 157-cysteine 214. Asparagine 235, asparagine 257, and asparagine 307 each carry an N-linked (GlcNAc...) asparagine glycan. Ig-like domains lie at 240 to 323, 338 to 432, 440 to 534, and 539 to 632; these read PTLK…KTVN, PDMI…VEVN, PTIS…VQLT, and PEVE…FQVS. Cystine bridges form between cysteine 262-cysteine 308, cysteine 357-cysteine 415, cysteine 463-cysteine 514, and cysteine 560-cysteine 616. The Fibronectin type-III domain maps to 644-744; the sequence is TPNPTRSHKL…SRVIHYTEPI (101 aa). An MAM domain is found at 752-919; it reads NTCHFEDEKI…VTLKKGECPR (168 aa). Polar residues predominate over residues 780–789; the sequence is LTQNPKRSPN. A disordered region spans residues 780–799; it reads LTQNPKRSPNTGPPTDISGT. Serine 933 carries GPI-anchor amidated serine lipidation. The propeptide at 934–956 is removed in mature form; the sequence is GAPRLSSLQLWGSMTIFLLALQR.

Interacts heterophilically through its MAM domain with proteins in axon-rich regions and through its Ig-like domains with proteins in differentiating muscle. Interacts (through the Ig-like domains) with NLGN2. In terms of tissue distribution, high levels detected in developing central and peripheral nervous systems with little expression elsewhere. In brain, highest levels in cerebral cortex and hindbrain at E15. At postnatal day 1, highest levels in basilar pons and superficial layers of the neocortex. In the developing spinal cord, restricted to a subpopulation of neurons in the dorsal and spinal ventral cord, probably D1 interneurons. Expressed in brain.

It localises to the cell membrane. Required for radial migration of cortical neurons in the superficial layer of the neocortex. Plays a role in the formation or maintenance of inhibitory synapses. May function by inhibiting the activity of NLGN2. In Rattus norvegicus (Rat), this protein is MAM domain-containing glycosylphosphatidylinositol anchor protein 1 (Mdga1).